The primary structure comprises 428 residues: Immunoglobulin superfamily containing leucine-rich repeat protein (428 aa).

Residues 1–18 (MQELHLLWWALLLGLAQA) form the signal peptide. Residues 19–50 (CPEPCDCGEKYGFQIADCAYRDLESVPPGFPA) enclose the LRRNT domain. N-linked (GlcNAc...) asparagine glycosylation is present at asparagine 51. 5 LRR repeats span residues 51–72 (NVTTLSLSANRLPGLPEGAFRE), 75–96 (LLQSLWLAHNEIRTVAAGALAS), 99–122 (HLKSLDLSHNLISDFAWSDLHNLS), 123–144 (ALQLLKMDSNELTFIPRDAFRS), and 147–168 (ALRSLQLNHNRLHTLAEGTFTP). The region spanning 180 to 231 (NPFDCTCGIVWLKTWALTTAVSIPEQDNIACTSPHVLKGTPLSRLPPLPCSA) is the LRRCT domain. The Ig-like domain occupies 232 to 343 (PSVQLSYQPS…GSAESSVDVA (112 aa)). Cysteine 257 and cysteine 327 are oxidised to a cystine. An N-linked (GlcNAc...) asparagine glycan is attached at asparagine 309.

As to expression, expressed in various tissues including retina, heart, skeletal muscle, prostate, ovary, small intestine, thyroid, adrenal cortex, testis, stomach and spinal cord.

The protein localises to the secreted. The protein is Immunoglobulin superfamily containing leucine-rich repeat protein (ISLR) of Homo sapiens (Human).